Here is a 506-residue protein sequence, read N- to C-terminus: Bifunctional purine biosynthesis protein PurH (506 aa).

The MGS-like domain occupies 1 to 146 (MARLALLSVS…KNFAHLTVLC (146 aa)).

The protein belongs to the PurH family.

The catalysed reaction is (6R)-10-formyltetrahydrofolate + 5-amino-1-(5-phospho-beta-D-ribosyl)imidazole-4-carboxamide = 5-formamido-1-(5-phospho-D-ribosyl)imidazole-4-carboxamide + (6S)-5,6,7,8-tetrahydrofolate. The enzyme catalyses IMP + H2O = 5-formamido-1-(5-phospho-D-ribosyl)imidazole-4-carboxamide. Its pathway is purine metabolism; IMP biosynthesis via de novo pathway; 5-formamido-1-(5-phospho-D-ribosyl)imidazole-4-carboxamide from 5-amino-1-(5-phospho-D-ribosyl)imidazole-4-carboxamide (10-formyl THF route): step 1/1. It participates in purine metabolism; IMP biosynthesis via de novo pathway; IMP from 5-formamido-1-(5-phospho-D-ribosyl)imidazole-4-carboxamide: step 1/1. The sequence is that of Bifunctional purine biosynthesis protein PurH from Trichormus variabilis (strain ATCC 29413 / PCC 7937) (Anabaena variabilis).